The primary structure comprises 593 residues: UvrABC system protein C (593 aa).

A GIY-YIG domain is found at 14-91 (DSPGCYLHKD…IQENMPKYNI (78 aa)). One can recognise a UVR domain in the interval 196 to 231 (NKIVNGLTEKMKSAAMTMEFERAAEYRDLIEAISLL).

This sequence belongs to the UvrC family. In terms of assembly, interacts with UvrB in an incision complex.

It localises to the cytoplasm. The UvrABC repair system catalyzes the recognition and processing of DNA lesions. UvrC both incises the 5' and 3' sides of the lesion. The N-terminal half is responsible for the 3' incision and the C-terminal half is responsible for the 5' incision. This chain is UvrABC system protein C, found in Streptococcus agalactiae serotype III (strain NEM316).